Consider the following 187-residue polypeptide: Anterior gradient protein 1 (187 aa).

Residues 1-20 form the signal peptide; that stretch reads MQTGLSLVCLVLLCSALGEA.

It belongs to the AGR family.

The protein resides in the secreted. Probably involved in cement gland formation. This is Anterior gradient protein 1 (ag1) from Xenopus tropicalis (Western clawed frog).